A 211-amino-acid chain; its full sequence is Ras-related protein Rab-38 (211 aa).

10 residues coordinate GTP: glycine 19, valine 20, glycine 21, lysine 22, threonine 23, serine 24, serine 35, serine 36, tyrosine 38, and threonine 41. A Mg(2+)-binding site is contributed by threonine 23. Residues 32 to 46 carry the Switch 1 motif; it reads QNFSSHYRATIGVDF. Residues threonine 41 and aspartate 65 each contribute to the Mg(2+) site. Residues glycine 68, lysine 128, aspartate 130, alanine 160, and lysine 161 each coordinate GTP. Positions 68 to 81 match the Switch 2 motif; it reads GQERFGNMTRVYYR. Cysteine 205 is lipidated: S-palmitoyl cysteine. Cysteine 208 carries S-geranylgeranyl cysteine lipidation.

The protein belongs to the small GTPase superfamily. Rab family. Interacts with ANKRD27. The cofactor is Mg(2+).

Its subcellular location is the cell membrane. The protein localises to the cytoplasmic vesicle. It is found in the phagosome. The protein resides in the phagosome membrane. It localises to the melanosome. Its subcellular location is the melanosome membrane. The enzyme catalyses GTP + H2O = GDP + phosphate + H(+). Its activity is regulated as follows. Regulated by guanine nucleotide exchange factors (GEFs) including the BLOC-3 complex composed of HPS1 and HPS4 which promote the exchange of bound GDP for free GTP. Regulated by GTPase activating proteins (GAPs) including SGSM2 which increase the GTP hydrolysis activity. Inhibited by GDP dissociation inhibitors (GDIs). The small GTPases Rab are key regulators of intracellular membrane trafficking, from the formation of transport vesicles to their fusion with membranes. Rabs cycle between an inactive GDP-bound form and an active GTP-bound form that is able to recruit to membranes different sets of downstream effectors directly responsible for vesicle formation, movement, tethering and fusion. RAB38 plays a role in the maturation of phagosomes that engulf pathogens, such as S.aureus and Mycobacterium. May be involved in melanosomal transport and docking. Involved in the proper sorting of TYRP1. Involved in peripheral melanosomal distribution of TYRP1 in melanocytes; the function, which probably is implicating vesicle-trafficking, includes cooperation with ANKRD27 and VAMP7. Plays an important role in the control of melanin production and melanosome biogenesis. In concert with RAB32, regulates the proper trafficking of melanogenic enzymes TYR, TYRP1 and DCT/TYRP2 to melanosomes in melanocytes. In Mus musculus (Mouse), this protein is Ras-related protein Rab-38.